We begin with the raw amino-acid sequence, 880 residues long: Alanine--tRNA ligase (880 aa).

The interval 414-443 is disordered; it reads TVDESEFESEMEKQRNRARKARSGGDTEGW. Zn(2+) contacts are provided by His-566, His-570, Cys-668, and His-672.

The protein belongs to the class-II aminoacyl-tRNA synthetase family. Zn(2+) is required as a cofactor.

It localises to the cytoplasm. It carries out the reaction tRNA(Ala) + L-alanine + ATP = L-alanyl-tRNA(Ala) + AMP + diphosphate. Functionally, catalyzes the attachment of alanine to tRNA(Ala) in a two-step reaction: alanine is first activated by ATP to form Ala-AMP and then transferred to the acceptor end of tRNA(Ala). Also edits incorrectly charged Ser-tRNA(Ala) and Gly-tRNA(Ala) via its editing domain. In Alkaliphilus metalliredigens (strain QYMF), this protein is Alanine--tRNA ligase.